We begin with the raw amino-acid sequence, 712 residues long: Sterol uptake control protein 2 (712 aa).

Residues 1–19 (MMMTVKQESPNSTLNTSEF) show a composition bias toward polar residues. Positions 1 to 52 (MMMTVKQESPNSTLNTSEFSSDENLKTNNSEPPKKVSKSSTGKRKYHQKSRN) are disordered. A compositionally biased stretch (basic residues) spans 35 to 50 (KVSKSSTGKRKYHQKS). The zn(2)-C6 fungal-type DNA-binding region spans 54-81 (CSTCKKRRVKCDEQRPVCGNCTKLKLDC). 2 disordered regions span residues 95–150 (KKDI…VIPP) and 236–342 (TTVP…ANPL). Polar residues-rich tracts occupy residues 113-143 (STVS…QDIK), 252-306 (RKSQ…SGSP), and 326-337 (KSLPNISPNMSI).

The protein resides in the nucleus. Functionally, transcription factor involved in the regulation of ergosterol biosynthetic genes such as ERG2 and ERG11 through direct binding to sterol response elements (SREs) in the promoters. Also binds to its own promoter on 2 cis-acting elements to promote autoregulation. Regulates sterol uptake across the plasma membrane. Acts as a major regulator of ascorbic acid-induced response. Plays a role in the triggering of pyroptosis, an inflammasome-mediated programmed cell death pathway in macrophages, allowing macrophages escaping. The chain is Sterol uptake control protein 2 from Candida albicans (strain SC5314 / ATCC MYA-2876) (Yeast).